The chain runs to 1128 residues: Major DNA-binding protein (1128 aa).

Residues 1104–1128 form a required for nuclear localization region; sequence LGGGGQGSGGRRKRRLATVLPGLEV.

Belongs to the herpesviridae major DNA-binding protein family. As to quaternary structure, homooligomers. Forms double-helical filaments necessary for the formation of replication compartments within the host nucleus. Interacts with the origin-binding protein. Interacts with the helicase primase complex; this interaction stimulates primer synthesis activity of the helicase-primase complex. Interacts with the DNA polymerase. Interacts with the alkaline exonuclease; this interaction increases its nuclease processivity.

It is found in the virion tegument. It localises to the host nucleus. Its function is as follows. Plays several crucial roles in viral infection. Participates in the opening of the viral DNA origin to initiate replication by interacting with the origin-binding protein. May disrupt loops, hairpins and other secondary structures present on ssDNA to reduce and eliminate pausing of viral DNA polymerase at specific sites during elongation. Promotes viral DNA recombination by performing strand-transfer, characterized by the ability to transfer a DNA strand from a linear duplex to a complementary single-stranded DNA circle. Can also catalyze the renaturation of complementary single strands. Additionally, reorganizes the host cell nucleus, leading to the formation of prereplicative sites and replication compartments. This process is driven by the protein which can form double-helical filaments in the absence of DNA. The polypeptide is Major DNA-binding protein (Homo sapiens (Human)).